A 298-amino-acid chain; its full sequence is Lipoyl synthase (298 aa).

[4Fe-4S] cluster-binding residues include Cys-43, Cys-48, Cys-54, Cys-69, Cys-73, Cys-76, and Ser-280. Positions 55–269 (FSSGTATFLI…AACGRGMGIP (215 aa)) constitute a Radical SAM core domain.

It belongs to the radical SAM superfamily. Lipoyl synthase family. The cofactor is [4Fe-4S] cluster.

The protein resides in the cytoplasm. It carries out the reaction [[Fe-S] cluster scaffold protein carrying a second [4Fe-4S](2+) cluster] + N(6)-octanoyl-L-lysyl-[protein] + 2 oxidized [2Fe-2S]-[ferredoxin] + 2 S-adenosyl-L-methionine + 4 H(+) = [[Fe-S] cluster scaffold protein] + N(6)-[(R)-dihydrolipoyl]-L-lysyl-[protein] + 4 Fe(3+) + 2 hydrogen sulfide + 2 5'-deoxyadenosine + 2 L-methionine + 2 reduced [2Fe-2S]-[ferredoxin]. It participates in protein modification; protein lipoylation via endogenous pathway; protein N(6)-(lipoyl)lysine from octanoyl-[acyl-carrier-protein]: step 2/2. Catalyzes the radical-mediated insertion of two sulfur atoms into the C-6 and C-8 positions of the octanoyl moiety bound to the lipoyl domains of lipoate-dependent enzymes, thereby converting the octanoylated domains into lipoylated derivatives. The chain is Lipoyl synthase from Nitratidesulfovibrio vulgaris (strain DP4) (Desulfovibrio vulgaris).